The sequence spans 277 residues: Protein CMSS1 (277 aa).

Over residues 1-14 (MADDLGNEWWEEPA) the composition is skewed to acidic residues. The segment at 1–91 (MADDLGNEWW…QHAPTAGTPE (91 aa)) is disordered. The segment covering 24–34 (EEVKESEESKG) has biased composition (basic and acidic residues). Over residues 35–52 (NKKKKIPSGKTQVKRKKE) the composition is skewed to basic residues. The span at 53–66 (VKVSQEAEKEDSAP) shows a compositional bias: basic and acidic residues.

Belongs to the CMS1 family.

This Xenopus laevis (African clawed frog) protein is Protein CMSS1 (cmss1).